The primary structure comprises 260 residues: Thiamine thiazole synthase (260 aa).

NAD(+)-binding positions include A36, 55 to 56, G63, and 154 to 156; these read EQ and HVD. 2 residues coordinate Fe cation: D156 and H171. An NAD(+)-binding site is contributed by M224. Position 234 (R234) interacts with glycine.

This sequence belongs to the THI4 family. Homooctamer; tetramer of dimers. The cofactor is Fe(2+).

The catalysed reaction is hydrogen sulfide + glycine + NAD(+) = ADP-5-ethyl-4-methylthiazole-2-carboxylate + nicotinamide + 3 H2O + H(+). It functions in the pathway cofactor biosynthesis; thiamine diphosphate biosynthesis. Functionally, involved in the biosynthesis of the thiazole moiety of thiamine. Catalyzes the conversion of NAD and glycine to adenosine diphosphate 5-(2-hydroxyethyl)-4-methylthiazole-2-carboxylate (ADT), an adenylated thiazole intermediate, using free sulfide as a source of sulfur. The protein is Thiamine thiazole synthase of Methanosarcina mazei (strain ATCC BAA-159 / DSM 3647 / Goe1 / Go1 / JCM 11833 / OCM 88) (Methanosarcina frisia).